Consider the following 91-residue polypeptide: Small ribosomal subunit protein bS20 (91 aa).

Over residues 1 to 21 (MPLHKSAEKRLRQSARRNERN) the composition is skewed to basic and acidic residues. Disordered regions lie at residues 1-25 (MPLH…RARK) and 71-91 (NKAS…AQKD).

Belongs to the bacterial ribosomal protein bS20 family.

Its function is as follows. Binds directly to 16S ribosomal RNA. In Prosthecochloris aestuarii (strain DSM 271 / SK 413), this protein is Small ribosomal subunit protein bS20.